Reading from the N-terminus, the 1630-residue chain is Transient receptor potential cation channel subfamily M member 1 (1630 aa).

Disordered regions lie at residues 1–25 (MGSM…GSQK), 65–92 (PLPS…SVSK), 453–492 (APPV…EVEE), 620–643 (LGME…EEEI), and 824–858 (SKEN…HKKQ). Residues 1 to 877 (MGSMRKMSSS…CEFYNAPIVK (877 aa)) lie on the Cytoplasmic side of the membrane. Residues 8–25 (SSSFKRGSIKSSTSGSQK) are compositionally biased toward low complexity. Polar residues predominate over residues 69-92 (VTPSSTAEDTKQGDAQSGKWSVSK). Residues 474-485 (GRGKGKGKKKGK) show a composition bias toward basic residues. 2 stretches are compositionally biased toward basic and acidic residues: residues 825–834 (KENEDGKEKE) and 845–855 (GSRKGDEENEH). The helical transmembrane segment at 878 to 898 (FWFYTISYLGYLLLFNYVILV) threads the bilayer. Topologically, residues 899–944 (RMDGWPSPQEWIVISYIVSLALEKIREILMSEPGKLSQKIKVWLQE) are extracellular. Residues 945 to 965 (YWNITDLVAISMFMVGAILRL) traverse the membrane as a helical segment. Over 966 to 975 (QNQPYMGYGR) the chain is Cytoplasmic. Residues 976-996 (VIYCVDIILWYIRVLDIFGVN) form a helical membrane-spanning segment. Residues 997 to 1008 (KYLGPYVMMIGK) lie on the Extracellular side of the membrane. Residues 1009 to 1029 (MMIDMLYFVVIMLVVLMSFGV) form a helical membrane-spanning segment. Topologically, residues 1030–1107 (ARQAILHPEE…CIPGAWLTPA (78 aa)) are cytoplasmic. The chain crosses the membrane as a helical span at residues 1108 to 1128 (LMACYLLVANILLVNLLIAVF). Asn1129 is a glycosylation site (N-linked (GlcNAc...) asparagine). The Extracellular segment spans residues 1129–1158 (NNTFFEVKSISNQVWKFQRYQLIMTFHDRP). A helical transmembrane segment spans residues 1159–1179 (VLPPPMIILSHIYIIVMRLSG). At 1180–1630 (RCRKKREGDQ…QEKGNPETEC (451 aa)) the chain is on the cytoplasmic side. Positions 1235-1255 (IRVTSERVENMSMRLEEINER) form a coiled coil. Disordered regions lie at residues 1362–1414 (EDVK…AGEL) and 1575–1630 (CLRS…ETEC).

It belongs to the transient receptor (TC 1.A.4) family. LTrpC subfamily. TRPM1 sub-subfamily. In terms of assembly, interacts with TRPM3; the interaction results in the formation of a heteromultimeric cation channel complex that are functionally different from the homomeric channels. Interacts with GPR179. Associates with both guanine nucleotide-binding proteins G(o) and beta-gamma G protein dimer; implicated in directly regulating TRPM1 channel open-state.

It is found in the cell membrane. Its subcellular location is the endoplasmic reticulum membrane. It localises to the cell projection. The protein resides in the axon. The enzyme catalyses Ca(2+)(in) = Ca(2+)(out). The catalysed reaction is Mg(2+)(in) = Mg(2+)(out). It catalyses the reaction Mn(2+)(in) = Mn(2+)(out). It carries out the reaction Ni(2+)(in) = Ni(2+)(out). Inhibited by extracellular zinc ions. Inhibited by intracellular Mg(2+). Activated by the neuroactive steroid pregnenolone sulfate. Negatively regulated by activation of GRM6 receptors in the ON-bipolar cells. In terms of biological role, constitutively open nonselective divalent cation-conducting channels which mediate the influx of Ca(2+), Mg(2+), Mn(2+), Ba(2+), and Ni(2+) into the cytoplasm, leading to membrane depolarization. Impermeable to zinc ions. In addition, forms heteromultimeric ion channels with TRPM3 which are permeable for calcium and zinc ions. Plays an essential role for the depolarizing photoresponse of retinal ON bipolar cells. In the dark, tonic release of glutamate activates the G-protein coupled receptor for glutamate GRM6, its activation induces the release of G(o) protein and the beta-gamma G protein dimer. Both subunits can interact and inactivate the TRPM1 channel. A light onset, induces decrease in glutamate release and deactivation of GRM6 leading to channel opening and membrane depolarization. May play a role in metastasis suppression. This chain is Transient receptor potential cation channel subfamily M member 1, found in Rattus norvegicus (Rat).